The primary structure comprises 763 residues: DNA polymerase 3 (763 aa).

The protein belongs to the DNA polymerase type-B family.

The enzyme catalyses DNA(n) + a 2'-deoxyribonucleoside 5'-triphosphate = DNA(n+1) + diphosphate. This chain is DNA polymerase 3 (dpo3), found in Saccharolobus shibatae (strain ATCC 51178 / DSM 5389 / JCM 8931 / NBRC 15437 / B12) (Sulfolobus shibatae).